A 383-amino-acid polypeptide reads, in one-letter code: Pleckstrin homology domain-containing family A member 1 (383 aa).

PH domains follow at residues 7 to 112 and 191 to 289; these read QNRI…KAIK and AVIK…GAIV. The residue at position 284 (Val284) is a Phosphoserine. The segment at 362–383 is disordered; sequence LPRSSQGTSRSRLSLQESQLPK. The span at 370–383 shows a compositional bias: low complexity; the sequence is SRSRLSLQESQLPK.

As to quaternary structure, interacts with MPDZ and PTPN13.

It localises to the cytoplasm. The protein localises to the cell membrane. It is found in the nucleus. Its function is as follows. Binds specifically to phosphatidylinositol 3,4-diphosphate (PtdIns3,4P2), but not to other phosphoinositides. May recruit other proteins to the plasma membrane. This Mus musculus (Mouse) protein is Pleckstrin homology domain-containing family A member 1 (Plekha1).